The chain runs to 1895 residues: Diacylglycerol kinase eta (1895 aa).

A compositionally biased stretch (basic and acidic residues) spans 1–10 (MAHLKLDTLH). The disordered stretch occupies residues 1-37 (MAHLKLDTLHVQRSPRGSRRSSPSSGRSSACSSGSIS). The span at 20 to 37 (RSSPSSGRSSACSSGSIS) shows a compositional bias: low complexity. The PH domain maps to 82–175 (AIIKEGFLLK…WLGSLKTATA (94 aa)). 2 consecutive Phorbol-ester/DAG-type zinc fingers follow at residues 195 to 245 (HHHW…IANC) and 267 to 318 (PHQW…AVAC). The region spanning 349-485 (GNFSPLLVFV…DRWSIMVFEK (137 aa)) is the DAGKc domain. Disordered stretches follow at residues 781 to 801 (ANIDDAGNRLSPCSDAGENTP), 1012 to 1053 (TTLC…MARL), 1113 to 1137 (QHRGGDNDSDYPEHEQTPTNKGANL), and 1172 to 1191 (PNTILTTSTSPTKKSGHGQD). The span at 1113-1128 (QHRGGDNDSDYPEHEQ) shows a compositional bias: basic and acidic residues. The span at 1172 to 1184 (PNTILTTSTSPTK) shows a compositional bias: polar residues. The region spanning 1832–1895 (WSVNEVVTWL…LQAIKDLSEN (64 aa)) is the SAM domain.

It belongs to the eukaryotic diacylglycerol kinase family.

Its subcellular location is the cytoplasm. It catalyses the reaction a 1,2-diacyl-sn-glycerol + ATP = a 1,2-diacyl-sn-glycero-3-phosphate + ADP + H(+). In terms of biological role, phosphorylates diacylglycerol (DAG) to generate phosphatidic acid (PA). This is Diacylglycerol kinase eta from Drosophila melanogaster (Fruit fly).